The sequence spans 275 residues: Myoblast determination protein 1 homolog 2 (275 aa).

One can recognise a bHLH domain in the interval 84 to 135; that stretch reads DRRKAATMRERRRLGKVNDAFENLKRCTSNNPNQRLPKVEILRNAISYIESL. Over residues 232-265 the composition is skewed to polar residues; that stretch reads SGQEGSEGSPCSPQEGSILSRNGGTVPSPTNCPQ. The disordered stretch occupies residues 232 to 275; it reads SGQEGSEGSPCSPQEGSILSRNGGTVPSPTNCPQPSHDPIYQVL.

As to quaternary structure, efficient DNA binding requires dimerization with another bHLH protein.

Its subcellular location is the nucleus. May act as a transcriptional activator that promotes transcription of muscle-specific target genes and plays a role in muscle differentiation. The chain is Myoblast determination protein 1 homolog 2 (myod2) from Oncorhynchus mykiss (Rainbow trout).